A 240-amino-acid chain; its full sequence is Orotidine 5'-phosphate decarboxylase (240 aa).

Substrate is bound by residues aspartate 15, lysine 37, 64–73 (DLKYHDIPNT), threonine 125, arginine 186, glutamine 195, glycine 215, and arginine 216. Lysine 66 (proton donor) is an active-site residue.

The protein belongs to the OMP decarboxylase family. Type 1 subfamily. As to quaternary structure, homodimer.

The enzyme catalyses orotidine 5'-phosphate + H(+) = UMP + CO2. It participates in pyrimidine metabolism; UMP biosynthesis via de novo pathway; UMP from orotate: step 2/2. In terms of biological role, catalyzes the decarboxylation of orotidine 5'-monophosphate (OMP) to uridine 5'-monophosphate (UMP). This Pelobacter propionicus (strain DSM 2379 / NBRC 103807 / OttBd1) protein is Orotidine 5'-phosphate decarboxylase.